A 510-amino-acid chain; its full sequence is Probable cytochrome P450 4aa1 (510 aa).

A heme-binding site is contributed by C450.

Belongs to the cytochrome P450 family. It depends on heme as a cofactor.

The protein localises to the endoplasmic reticulum membrane. It is found in the microsome membrane. In terms of biological role, may be involved in the metabolism of insect hormones and in the breakdown of synthetic insecticides. The protein is Probable cytochrome P450 4aa1 (Cyp4aa1) of Drosophila melanogaster (Fruit fly).